The following is an 837-amino-acid chain: Outer membrane usher protein HifC (837 aa).

The signal sequence occupies residues 1 to 26; that stretch reads MKTKNFPLNKIAFACTLLLANPVAWA. A disulfide bridge connects residues cysteine 813 and cysteine 833.

Belongs to the fimbrial export usher family.

The protein localises to the cell outer membrane. Functionally, essential for piliation. The sequence is that of Outer membrane usher protein HifC (hifC) from Haemophilus influenzae.